A 186-amino-acid chain; its full sequence is Putative 5'(3')-deoxyribonucleotidase (186 aa).

It belongs to the 5'(3')-deoxyribonucleotidase family. The cofactor is Mg(2+).

In terms of biological role, dephosphorylates the 5' and 2'(3')-phosphates of deoxyribonucleotides. This Bordetella parapertussis (strain 12822 / ATCC BAA-587 / NCTC 13253) protein is Putative 5'(3')-deoxyribonucleotidase.